A 798-amino-acid polypeptide reads, in one-letter code: Tripartite terminase subunit 1 (798 aa).

Residues 191–219 (CFQCYEELMAVPNQGRSINRRMQGLLCDH) form a C3H1-type zinc finger. The segment covering 416-429 (AAGAARSRAEAASG) has biased composition (low complexity). The tract at residues 416 to 458 (AAGAARSRAEAASGAGAGGEEGAGAAAGRGNTGGDEGAGTTTA) is disordered. Positions 430 to 452 (AGAGGEEGAGAAAGRGNTGGDEG) are enriched in gly residues. 674-681 (YNETFGKQ) is a binding site for ATP.

Belongs to the herpesviridae TRM1 protein family. Associates with TRM2 and TRM3 to form the tripartite terminase complex. Interacts with portal protein.

It localises to the host nucleus. Functionally, component of the molecular motor that translocates viral genomic DNA in empty capsid during DNA packaging. Forms a tripartite terminase complex together with TRM2 and TRM3 in the host cytoplasm. Once the complex reaches the host nucleus, it interacts with the capsid portal vertex. This portal forms a ring in which genomic DNA is translocated into the capsid. TRM1 carries an endonuclease activity that plays an important role for the cleavage of concatemeric viral DNA into unit length genomes. The sequence is that of Tripartite terminase subunit 1 from Murid herpesvirus 1 (strain Smith) (MuHV-1).